The chain runs to 332 residues: MLIAQRPTLTEESLNPQRSRFTIEPLEPGFGYTLGNSLRRTLLSSIPGAAVTSVRISGVPHEFTTLPGVEEDVTEILLNIKGIVLTSEYDEPVVMYLRKSGKGEATAGDITPPAGVTIANPDMHIATLAEDGELEIEFTVERGRGYVPAQMNKQDNAEIGRIPVDSIYSPVLKVSYRVEATRVEQRTDFDKLILDVETKPAISPRDAVASAGSTLVELFGLCRELNTQAEGVEVGPAPVAEETNPEMNIPIEDLNLTQRSYNCLKREGIHTIGELVAHTEQDLLDIRNFGMKSIDEVKEKLQSLGLALKASPLGNFDANNLEGGTFFSPEDE.

Residues 1 to 226 (MLIAQRPTLT…ELFGLCRELN (226 aa)) are alpha N-terminal domain (alpha-NTD). The interval 245-332 (PEMNIPIEDL…GGTFFSPEDE (88 aa)) is alpha C-terminal domain (alpha-CTD).

It belongs to the RNA polymerase alpha chain family. In terms of assembly, homodimer. The RNAP catalytic core consists of 2 alpha, 1 beta, 1 beta' and 1 omega subunit. When a sigma factor is associated with the core the holoenzyme is formed, which can initiate transcription.

It carries out the reaction RNA(n) + a ribonucleoside 5'-triphosphate = RNA(n+1) + diphosphate. DNA-dependent RNA polymerase catalyzes the transcription of DNA into RNA using the four ribonucleoside triphosphates as substrates. The polypeptide is DNA-directed RNA polymerase subunit alpha (Bifidobacterium adolescentis (strain ATCC 15703 / DSM 20083 / NCTC 11814 / E194a)).